The chain runs to 355 residues: Uroporphyrinogen decarboxylase (355 aa).

Substrate-binding positions include 38–42, Asp87, Tyr162, Ser217, and His331; that span reads RQAGR.

This sequence belongs to the uroporphyrinogen decarboxylase family. Homodimer.

The protein localises to the cytoplasm. It carries out the reaction uroporphyrinogen III + 4 H(+) = coproporphyrinogen III + 4 CO2. The protein operates within porphyrin-containing compound metabolism; protoporphyrin-IX biosynthesis; coproporphyrinogen-III from 5-aminolevulinate: step 4/4. Its function is as follows. Catalyzes the decarboxylation of four acetate groups of uroporphyrinogen-III to yield coproporphyrinogen-III. The sequence is that of Uroporphyrinogen decarboxylase from Streptomyces coelicolor (strain ATCC BAA-471 / A3(2) / M145).